Consider the following 521-residue polypeptide: Exoglucanase 1 (521 aa).

The signal sequence occupies residues 1–17; sequence MLAKFAALAALVASANA. A catalytic region spans residues 18–450; the sequence is QAVCSLTAET…FGPIGSTFSG (433 aa). An N-linked (GlcNAc...) asparagine glycan is attached at N32. The active-site Nucleophile is E229. The active-site Proton donor is E234. N287 carries an N-linked (GlcNAc...) asparagine glycan. Positions 447–486 are disordered; sequence TFSGGSSGTPPSNPSSSVKPVTSTAKPSSTSTASNPSGTG. The linker stretch occupies residues 451–485; the sequence is GSSGTPPSNPSSSVKPVTSTAKPSSTSTASNPSGT. Residues 485 to 521 form the CBM1 domain; sequence TGAAHWAQCGGIGFSGPTTCQSPYTCQKINDYYSQCV. Intrachain disulfides connect C493/C510 and C504/C520.

This sequence belongs to the glycosyl hydrolase 7 (cellulase C) family.

It is found in the secreted. It carries out the reaction Hydrolysis of (1-&gt;4)-beta-D-glucosidic linkages in cellulose and cellotetraose, releasing cellobiose from the non-reducing ends of the chains.. The protein is Exoglucanase 1 (cbh-1) of Neurospora crassa (strain ATCC 24698 / 74-OR23-1A / CBS 708.71 / DSM 1257 / FGSC 987).